We begin with the raw amino-acid sequence, 508 residues long: Photosystem II CP47 reaction center protein (508 aa).

6 consecutive transmembrane segments (helical) span residues 21-36 (AVHI…WAGS), 101-115 (IVFS…IWHW), 140-156 (GIHL…FGAF), 203-218 (IAAG…FHLS), 237-252 (VLSS…AFVV), and 457-472 (SFAL…HGAR).

Belongs to the PsbB/PsbC family. PsbB subfamily. PSII is composed of 1 copy each of membrane proteins PsbA, PsbB, PsbC, PsbD, PsbE, PsbF, PsbH, PsbI, PsbJ, PsbK, PsbL, PsbM, PsbT, PsbX, PsbY, PsbZ, Psb30/Ycf12, at least 3 peripheral proteins of the oxygen-evolving complex and a large number of cofactors. It forms dimeric complexes. Binds multiple chlorophylls. PSII binds additional chlorophylls, carotenoids and specific lipids. serves as cofactor.

It localises to the plastid. It is found in the chloroplast thylakoid membrane. Functionally, one of the components of the core complex of photosystem II (PSII). It binds chlorophyll and helps catalyze the primary light-induced photochemical processes of PSII. PSII is a light-driven water:plastoquinone oxidoreductase, using light energy to abstract electrons from H(2)O, generating O(2) and a proton gradient subsequently used for ATP formation. The sequence is that of Photosystem II CP47 reaction center protein from Trachelium caeruleum (Blue throatwort).